A 323-amino-acid polypeptide reads, in one-letter code: GTP 3',8-cyclase (323 aa).

In terms of domain architecture, Radical SAM core spans 4-228 (KYGRSIDYLR…VPVNIQNNGP (225 aa)). A GTP-binding site is contributed by arginine 13. Residues cysteine 20 and cysteine 24 each contribute to the [4Fe-4S] cluster site. Residue tyrosine 26 participates in S-adenosyl-L-methionine binding. Cysteine 27 contributes to the [4Fe-4S] cluster binding site. Arginine 63 is a binding site for GTP. Residue glycine 67 coordinates S-adenosyl-L-methionine. Position 94 (threonine 94) interacts with GTP. Residue serine 118 participates in S-adenosyl-L-methionine binding. Lysine 155 is a binding site for GTP. Methionine 189 contributes to the S-adenosyl-L-methionine binding site. [4Fe-4S] cluster is bound by residues cysteine 252 and cysteine 255. 257 to 259 (RMR) provides a ligand contact to GTP. Cysteine 269 serves as a coordination point for [4Fe-4S] cluster.

The protein belongs to the radical SAM superfamily. MoaA family. In terms of assembly, monomer and homodimer. [4Fe-4S] cluster serves as cofactor.

The catalysed reaction is GTP + AH2 + S-adenosyl-L-methionine = (8S)-3',8-cyclo-7,8-dihydroguanosine 5'-triphosphate + 5'-deoxyadenosine + L-methionine + A + H(+). Its pathway is cofactor biosynthesis; molybdopterin biosynthesis. Its function is as follows. Catalyzes the cyclization of GTP to (8S)-3',8-cyclo-7,8-dihydroguanosine 5'-triphosphate. In Petrotoga mobilis (strain DSM 10674 / SJ95), this protein is GTP 3',8-cyclase.